Reading from the N-terminus, the 628-residue chain is ATP-dependent RNA helicase mrh4, mitochondrial (628 aa).

The N-terminal 40 residues, 1–40 (MSLAVRPPVCLLCRSGAPTLLPSSVSQVARSMATARLRRK), are a transit peptide targeting the mitochondrion. Positions 51–109 (AKSSINQKRSGKAKFGPWSGMNQTEAHIRGEPRSRSQAALRRSGEKAADTPRKSDSPLY) are disordered. Over residues 92–105 (RSGEKAADTPRKSD) the composition is skewed to basic and acidic residues. Positions 137–170 (TSFDHFPLLPVVRHSIFSQALPGLVDVTPTPIQR) match the Q motif motif. The Helicase ATP-binding domain maps to 190–402 (EDGDPQYDQY…RKRYPDIKRL (213 aa)). 203-210 (AETGSGKT) is an ATP binding site. The span at 228–253 (DKENERKEEERKAKEKEERLKNRAFD) shows a compositional bias: basic and acidic residues. Residues 228–260 (DKENERKEEERKAKEKEERLKNRAFDLEPEEPP) are disordered. The short motif at 349 to 352 (DEAD) is the DEAD box element. A Helicase C-terminal domain is found at 456-628 (YVGPNIKKIL…EGMFRGQALI (173 aa)).

It belongs to the DEAD box helicase family. MRH4 subfamily.

It localises to the mitochondrion. It catalyses the reaction ATP + H2O = ADP + phosphate + H(+). In terms of biological role, ATP-binding RNA helicase involved in mitochondrial RNA metabolism. Required for maintenance of mitochondrial DNA. The polypeptide is ATP-dependent RNA helicase mrh4, mitochondrial (mrh4) (Aspergillus oryzae (strain ATCC 42149 / RIB 40) (Yellow koji mold)).